The primary structure comprises 194 residues: Calcium channel flower (194 aa).

Transmembrane regions (helical) follow at residues 34–54 (LLGI…VFSI), 59–79 (VSCL…MLLE), and 107–127 (GLYI…ASLF).

Belongs to the calcium channel flower family. Homomultimer. Associates with the dally/ magu complex.

Its subcellular location is the cell membrane. The protein resides in the cytoplasmic vesicle. The protein localises to the secretory vesicle. It is found in the synaptic vesicle membrane. It localises to the presynaptic cell membrane. Its subcellular location is the endosome. Its activity is regulated as follows. Channel activity is inhibited by La(3+), which reduces Ca(2+) influx and thus inhibits it's function in promoting activity-dependent bulk endocytosis (ADBE) in response to high stimuli. Its function is as follows. Transmembrane protein which mediates synaptic endocytosis, fitness-based cell culling, neuronal culling, morphogen gradient scaling, and calcium transport. Regulates synaptic endocytosis and hence couples exo- with endocytosis. Controls two major modes of synaptic vesicle (SV) endocytosis in the synaptic boutons of neuromuscular junctions (NMJs); Ca(2+) channel-independent Clathrin-mediated endocytosis (CME) in response to mild stimulation, and Ca(2+) channel-dependent activity-dependent bulk endocytosis (ADBE) in response to strong stimulation. Functions in ADBE and subsequent SV reformation from bulk endosomes by initiating Ca(2+) channel-dependent phosphatidylinositol 4,5-bisphosphate (PtdIns(4,5)P2) compartmentalization in synaptic boutons. There it acts at the periactive zone to provide the low Ca(2+) levels required to initiate Calcineurin activation and upregulate PtdIns(4,5)P2. Conversely PtdIns(4,5)P2 enhances fwe Ca(2+) channel-activity, establishing a positive feedback loop that induces PtdIns(4,5)P2 microdomain at the periactive zone. These microdomains trigger bulk membrane invagination (i.e. ADBE) by triggering actin polymerization while also promoting localization of fwe to bulk endosomes, thereby removing the ADBE trigger to reduce endocytosis and prevent excess membrane uptake. PtdIns(4,5)P2 then promotes SV reformation from the bulk endosomes, to coordinate ADBE and subsequent SV reformation. Different combinations of the flower isoforms at the cell membrane are also required for the identification and elimination of suboptimal or supernumerary cells during development, regeneration, and adulthood. Required for the recognition and elimination of unfit cells in the developing wing during cell competition. In the developing pupal retina, mediates the elimination of unwanted postmitotic neurons, including supernumerary photoreceptor neurons that form at the periphery of the retina and are contained within incomplete ommatidia units. Also required for efficient elimination and replacement of old neurons by newly generated neurons during regeneration in the adult brain following mechanical injury. Downstream of the flower fitness fingerprints, cells identified as unwanted or unfit are eliminated via apoptosis through the expression of ahuizotl (azot). However, the cells marked for elimination by the flower isoforms only undergo apoptosis if additional thresholds are met; (1) their neighboring fit/healthy cells express different levels of the fwe isoforms, and (2) the levels of the protective signal SPARC expressed by the loser or unwanted cells are unable to inhibit caspase activation. These additional thresholds for flower-mediated apoptosis, allows useful cells to recover from transient and limited stress before they are unnecessarily eliminated. Functions with dally and magu in a mechanism of scaling, which utilises apoptosis to ensure that the dpp morphogen gradient, which mediates organ growth, remains proportional to the size of the growing wing. In this mechanism, fwe represses dally- and Magu-dependent activity in expanding the gradient, and dally/Magu inhibits fwe-dependent apoptosis to keep cell death rate low. When the levels of these different proteins are optimally regulated the gradient correctly scales with organ growth but when this fails, fwe-mediated apoptosis is activated to trim the developing tissue to match the correct size of the gradient. In Drosophila erecta (Fruit fly), this protein is Calcium channel flower.